A 118-amino-acid chain; its full sequence is Ribosome-binding factor A (118 aa).

The protein belongs to the RbfA family. In terms of assembly, monomer. Binds 30S ribosomal subunits, but not 50S ribosomal subunits or 70S ribosomes.

It is found in the cytoplasm. Its function is as follows. One of several proteins that assist in the late maturation steps of the functional core of the 30S ribosomal subunit. Associates with free 30S ribosomal subunits (but not with 30S subunits that are part of 70S ribosomes or polysomes). Required for efficient processing of 16S rRNA. May interact with the 5'-terminal helix region of 16S rRNA. The sequence is that of Ribosome-binding factor A from Latilactobacillus sakei subsp. sakei (strain 23K) (Lactobacillus sakei subsp. sakei).